The primary structure comprises 165 residues: Neurotrophin-3 (165 aa).

The N-terminal stretch at 1 to 3 is a signal peptide; the sequence is IQS. Positions 4 to 119 are excised as a propeptide; the sequence is TSMDQGSLTE…VLNRTSRRKR (116 aa). N112 carries N-linked (GlcNAc...) asparagine glycosylation.

This sequence belongs to the NGF-beta family.

The protein resides in the secreted. Its function is as follows. Seems to promote the survival of visceral and proprioceptive sensory neurons. This Calabaria reinhardtii (Calabar boa) protein is Neurotrophin-3 (NTF3).